Here is a 382-residue protein sequence, read N- to C-terminus: Carboxynorspermidine/carboxyspermidine decarboxylase (382 aa).

Lysine 41 carries the N6-(pyridoxal phosphate)lysine modification. 2 residues coordinate substrate: glutamate 236 and aspartate 272.

It belongs to the Orn/Lys/Arg decarboxylase class-II family. NspC subfamily. As to quaternary structure, homodimer. Pyridoxal 5'-phosphate is required as a cofactor.

It localises to the cytoplasm. It catalyses the reaction carboxynorspermidine + H(+) = norspermidine + CO2. The catalysed reaction is carboxyspermidine + H(+) = spermidine + CO2. Catalyzes the decarboxylation of carboxynorspermidine and carboxyspermidine in vitro. In vivo, responsible for synthesizing spermidine, but not sym-norspermidine. The chain is Carboxynorspermidine/carboxyspermidine decarboxylase from Campylobacter jejuni subsp. jejuni serotype O:6 (strain 81116 / NCTC 11828).